Reading from the N-terminus, the 246-residue chain is Pyridoxine 5'-phosphate synthase (246 aa).

Asparagine 12 provides a ligand contact to 3-amino-2-oxopropyl phosphate. 14 to 15 contacts 1-deoxy-D-xylulose 5-phosphate; that stretch reads DH. Position 23 (arginine 23) interacts with 3-amino-2-oxopropyl phosphate. Histidine 48 functions as the Proton acceptor in the catalytic mechanism. Arginine 50 and histidine 55 together coordinate 1-deoxy-D-xylulose 5-phosphate. Glutamate 75 acts as the Proton acceptor in catalysis. Threonine 105 contacts 1-deoxy-D-xylulose 5-phosphate. Histidine 196 (proton donor) is an active-site residue. 3-amino-2-oxopropyl phosphate contacts are provided by residues glycine 197 and 218–219; that span reads GH.

The protein belongs to the PNP synthase family. In terms of assembly, homooctamer; tetramer of dimers.

It is found in the cytoplasm. The enzyme catalyses 3-amino-2-oxopropyl phosphate + 1-deoxy-D-xylulose 5-phosphate = pyridoxine 5'-phosphate + phosphate + 2 H2O + H(+). Its pathway is cofactor biosynthesis; pyridoxine 5'-phosphate biosynthesis; pyridoxine 5'-phosphate from D-erythrose 4-phosphate: step 5/5. Functionally, catalyzes the complicated ring closure reaction between the two acyclic compounds 1-deoxy-D-xylulose-5-phosphate (DXP) and 3-amino-2-oxopropyl phosphate (1-amino-acetone-3-phosphate or AAP) to form pyridoxine 5'-phosphate (PNP) and inorganic phosphate. This is Pyridoxine 5'-phosphate synthase from Thioalkalivibrio sulfidiphilus (strain HL-EbGR7).